The primary structure comprises 97 residues: Large ribosomal subunit protein bL27 (97 aa).

A propeptide spanning residues 1–12 is cleaved from the precursor; it reads MLKMNLANLQLF. Positions 14-37 are disordered; sequence HKKGGGSTSNGRDSQAKRLGAKAA.

Belongs to the bacterial ribosomal protein bL27 family. The N-terminus is cleaved by ribosomal processing cysteine protease Prp.

This chain is Large ribosomal subunit protein bL27, found in Streptococcus uberis (strain ATCC BAA-854 / 0140J).